We begin with the raw amino-acid sequence, 213 residues long: Protein-L-isoaspartate O-methyltransferase (213 aa).

Residue Ser64 is part of the active site.

It belongs to the methyltransferase superfamily. L-isoaspartyl/D-aspartyl protein methyltransferase family.

It is found in the cytoplasm. It catalyses the reaction [protein]-L-isoaspartate + S-adenosyl-L-methionine = [protein]-L-isoaspartate alpha-methyl ester + S-adenosyl-L-homocysteine. Its function is as follows. Catalyzes the methyl esterification of L-isoaspartyl residues in peptides and proteins that result from spontaneous decomposition of normal L-aspartyl and L-asparaginyl residues. It plays a role in the repair and/or degradation of damaged proteins. The chain is Protein-L-isoaspartate O-methyltransferase from Christiangramia forsetii (strain DSM 17595 / CGMCC 1.15422 / KT0803) (Gramella forsetii).